A 365-amino-acid chain; its full sequence is UDP-N-acetylglucosamine--N-acetylmuramyl-(pentapeptide) pyrophosphoryl-undecaprenol N-acetylglucosamine transferase (365 aa).

Residues 19-21, N131, R170, S201, I255, 274-279, and Q300 contribute to the UDP-N-acetyl-alpha-D-glucosamine site; these read TGG and ALTVTE.

This sequence belongs to the glycosyltransferase 28 family. MurG subfamily.

The protein resides in the cell inner membrane. It carries out the reaction di-trans,octa-cis-undecaprenyl diphospho-N-acetyl-alpha-D-muramoyl-L-alanyl-D-glutamyl-meso-2,6-diaminopimeloyl-D-alanyl-D-alanine + UDP-N-acetyl-alpha-D-glucosamine = di-trans,octa-cis-undecaprenyl diphospho-[N-acetyl-alpha-D-glucosaminyl-(1-&gt;4)]-N-acetyl-alpha-D-muramoyl-L-alanyl-D-glutamyl-meso-2,6-diaminopimeloyl-D-alanyl-D-alanine + UDP + H(+). The protein operates within cell wall biogenesis; peptidoglycan biosynthesis. Functionally, cell wall formation. Catalyzes the transfer of a GlcNAc subunit on undecaprenyl-pyrophosphoryl-MurNAc-pentapeptide (lipid intermediate I) to form undecaprenyl-pyrophosphoryl-MurNAc-(pentapeptide)GlcNAc (lipid intermediate II). The chain is UDP-N-acetylglucosamine--N-acetylmuramyl-(pentapeptide) pyrophosphoryl-undecaprenol N-acetylglucosamine transferase from Acinetobacter baumannii (strain AB307-0294).